Here is a 394-residue protein sequence, read N- to C-terminus: Elongation factor Tu (394 aa).

The tr-type G domain occupies 10–205 (KPHMNVGTIG…TMDNYFDLPE (196 aa)). The segment at 19–26 (GHVDHGKT) is G1. A GTP-binding site is contributed by 19–26 (GHVDHGKT). Thr-26 provides a ligand contact to Mg(2+). The G2 stretch occupies residues 61–65 (GITIN). A G3 region spans residues 82-85 (DCPG). Residues 82-86 (DCPGH) and 137-140 (NKLD) contribute to the GTP site. A G4 region spans residues 137-140 (NKLD). The tract at residues 173–175 (SAF) is G5.

It belongs to the TRAFAC class translation factor GTPase superfamily. Classic translation factor GTPase family. EF-Tu/EF-1A subfamily. Monomer.

The protein localises to the cytoplasm. The enzyme catalyses GTP + H2O = GDP + phosphate + H(+). Functionally, GTP hydrolase that promotes the GTP-dependent binding of aminoacyl-tRNA to the A-site of ribosomes during protein biosynthesis. This Borrelia duttonii (strain Ly) protein is Elongation factor Tu.